Consider the following 1544-residue polypeptide: MAAPQDLDIAVWLATVHLEQYADTFRRHGLATAGAARGLGHEELKQLGISATGHRKRILRLLQTGTEEGSLDPKSDSAMEPSPSPAPQAQPPKPVPKPRTVFGGLSGPATTQRPGLSPALGGPGVSRSPEPSPRPPPLPTSSSEQSSALNTVEMMPNSIYFGLDSRGRAQAAQDKAPDSSQISAPTPALRPTTGTVHIMDPGCLYYGVQPVGTPGAPDRRESRGVCQGRAEHRLSRQDLEAREDAGYASLELPGDSTLLSPTLETEETSDDLISPYASFSFTADRLTPLLSGWLDKLSPQGNYVFQRRFVQFNGRSLMYFGSDKDPFPKGVIPLTAIEMTRSSKDNKFQVITGQRVFVFRTESEAQRDMWCSTLQSCLKEQRLLGHPRPPQPPRPLRTGMLELRGHKAKVFAALSPGELALYKSEQAFSLGIGICFIELQGCSVRETKSRSFDLLTPHRCFSFTAESGGARQSWAAALQEAVTETLSDYEVAEKIWSNRANRQCADCGSSRPDWAAVNLGVVICKQCAGQHRALGSGISKVQSLKLDTSVWSNEIVQLFIVLGNDRANRFWAGTLPPGEGLHPDATPGPRGEFISRKYRLGLFRKPHPQYPDHSQLLQALCAAVARPNLLKNMTQLLCVEAFEGEEPWFPPAPDGSCPGLLPSDPSPGVYNEVVVRATYSGFLYCSPVSNKAGPSPPRRGRDAPPRLWCVLGAALEMFASENSPEPLSLIQPQDIVCLGVSPPPTDPGDRFPFSFELILAGGRIQHFGTDGADSLEAWTSAVGKWFSPLSCHQLLGPGLLRLGRLWLRSPSHTAPAPGLWLSGFGLLRGDHLFLCSAPGPGPPAPEDMVHLRRLQEISVVSAADTPDKKEHLVLVETGRTLYLQGEGRLDFTAWNAAIGGAAGGGGTGLQEQQMSRGDIPIIVDACISFVTQHGLRLEGVYRKGGARARSLRLLAEFRRDARSVKLRPGEHFVEDVTDTLKRFFRELDDPVTSARLLPRWREAAELPQKNQRLEKYKDVIGCLPRVNRRTLATLIGHLYRVQKCAALNQMCTRNLALLFAPSVFQTDGRGEHEVRVLQELIDGYISVFDIDSDQVAQIDLEVSLITTWKDVQLSQAGDLIMEVYIEQQLPDNCVTLKVSPTLTAEELTNQVLEMRGTAAGMDLWVTFEIREHGELERPLHPKEKVLEQALQWCQLPEPCSASLLLKKVPLAQAGCLFTGIRRESPRVGLLRCREEPPRLLGSRFQERFFLLRGRCLLLLKEKKSSKPEREWPLEGAKVYLGIRKKLKPPTPWGFTLILEKMHLYLSCTDEDEMWDWTTSILKAQHDDQQPVVLRRHSSSDLARQKFGTMPLLPIRGDDSGATLLSANQTLRRLHNRRTLSMFFPMKSSQGSVEEQEELEEPVYEEPVYEEVGAFPELIQDTSTSFSTTREWTVKPENPLTSQKSLDQPFLSKSSTLGQEERPPEPPPGPPSKSSPQARGSLEEQLLQELSSLILRKGETTAGLGSPSQPSSPQSPSPTGLPTQTPGFPTQPPCTSSPPSSQPLT.

Residues 4-68 (PQDLDIAVWL…LRLLQTGTEE (65 aa)) enclose the SAM domain. Disordered regions lie at residues 64-147 (TGTE…EQSS) and 167-194 (GRAQ…PTTG). Pro residues-rich tracts occupy residues 82–97 (SPSP…PVPK) and 130–139 (EPSPRPPPLP). PH domains follow at residues 287–379 (TPLL…SCLK) and 394–483 (RPLR…EAVT). The region spanning 480–611 (EAVTETLSDY…LFRKPHPQYP (132 aa)) is the Arf-GAP domain. A C4-type zinc finger spans residues 504–527 (CADCGSSRPDWAAVNLGVVICKQC). The region spanning 907–1088 (TGLQEQQMSR…ELIDGYISVF (182 aa)) is the Rho-GAP domain. The Ras-associating domain occupies 1117-1210 (GDLIMEVYIE…ASLLLKKVPL (94 aa)). The region spanning 1223–1325 (ESPRVGLLRC…WTTSILKAQH (103 aa)) is the PH 3 domain. T1348 carries the post-translational modification Phosphothreonine. Y1403 and Y1408 each carry phosphotyrosine. Residues 1422–1544 (STSFSTTREW…SSPPSSQPLT (123 aa)) are disordered. A compositionally biased stretch (polar residues) spans 1438–1457 (PLTSQKSLDQPFLSKSSTLG). Phosphoserine occurs at positions 1444 and 1480. 2 stretches are compositionally biased toward low complexity: residues 1482-1492 (EEQLLQELSSL) and 1502-1527 (GLGS…TPGF).

In terms of assembly, interacts (via SAM domain) with INPPL1/SHIP2. In terms of processing, tyrosine phosphorylated at a low basal level. PDGF treatment stimulates phosphorylation. Tyrosine phosphorylation is increased in cells that are in the process of becoming attached to a substrate and that start spreading and flattening.

The protein resides in the cytoplasm. The protein localises to the cytoskeleton. Its subcellular location is the cell membrane. It is found in the cell projection. It localises to the lamellipodium. The protein resides in the ruffle. In terms of biological role, phosphatidylinositol 3,4,5-trisphosphate-dependent GTPase-activating protein that modulates actin cytoskeleton remodeling by regulating ARF and RHO family members. Is activated by phosphatidylinositol 3,4,5-trisphosphate (PtdIns(3,4,5)P3) binding. Can be activated by phosphatidylinositol 3,4-bisphosphate (PtdIns(3,4,5)P2) binding, albeit with lower efficiency. Acts on ARF6, RAC1, RHOA and CDC42. Plays a role in the internalization of anthrax toxin. This chain is Arf-GAP with Rho-GAP domain, ANK repeat and PH domain-containing protein 3 (ARAP3), found in Homo sapiens (Human).